The sequence spans 266 residues: Adaptin ear-binding coat-associated protein 2 (266 aa).

Disordered regions lie at residues 164–191 (SMKK…LPPP) and 244–266 (GDFT…WVQF). S181 is modified (phosphoserine). The short motif at 243–246 (WGDF) is the WXXF motif 1 element. The segment covering 247 to 258 (TKSTGSTSSQTQ) has biased composition (low complexity). The short motif at 263-266 (WVQF) is the WXXF motif 2 element.

It belongs to the NECAP family. As to quaternary structure, interacts with AP1G1 and AP2A1 components of the adapter protein complexes AP-1 and AP-2. Interacts with the GAE domain proteins GGA1, GGA2 and GGA3.

The protein localises to the cytoplasmic vesicle. It is found in the clathrin-coated vesicle membrane. Its subcellular location is the cell membrane. In terms of biological role, involved in endocytosis. This Bos taurus (Bovine) protein is Adaptin ear-binding coat-associated protein 2 (NECAP2).